Reading from the N-terminus, the 311-residue chain is Pyrimidine-specific ribonucleoside hydrolase RihA (311 aa).

H240 is a catalytic residue.

Belongs to the IUNH family. RihA subfamily.

Functionally, hydrolyzes cytidine or uridine to ribose and cytosine or uracil, respectively. The protein is Pyrimidine-specific ribonucleoside hydrolase RihA of Klebsiella pneumoniae subsp. pneumoniae (strain ATCC 700721 / MGH 78578).